The primary structure comprises 1012 residues: Vacuolar membrane protease (1012 aa).

Residues 1–60 (MRRSTDPRNLLVRRGPLLVDGESAISELDPGFFPTGDAPKMSSTTRRRFNLIAFTPGPVT) lie on the Cytoplasmic side of the membrane. The helical transmembrane segment at 61 to 81 (VISSLVYLALLIPLLLVHTIV) threads the bilayer. At 82–432 (PSAPKSNPKG…SFAVFRLHTL (351 aa)) the chain is on the vacuolar side. Asparagine 159 is a glycosylation site (N-linked (GlcNAc...) asparagine). Zn(2+) contacts are provided by histidine 215 and aspartate 227. Glutamate 261 functions as the Proton acceptor in the catalytic mechanism. Glutamate 262, glutamate 287, and histidine 360 together coordinate Zn(2+). The chain crosses the membrane as a helical span at residues 433 to 453 (FAISVTLLVVCPIVLFVIGII). At 454–487 (LSKMDKMYLFSIHETIPETKEKVSVRGLRGLFRY) the chain is on the cytoplasmic side. Residues 488 to 508 (PIILVVSSGILIGLSYLLAKV) form a helical membrane-spanning segment. Topologically, residues 509–518 (NPFIVHSSSY) are vacuolar. Residues 519–539 (AVWSMMLSSWIFMTWFLSCIA) traverse the membrane as a helical segment. Residues 540 to 550 (DFFRPSALHRA) lie on the Cytoplasmic side of the membrane. A helical transmembrane segment spans residues 551 to 571 (YTFTWQLLVMWVLLVISTVYV). At 572–575 (NQHD) the chain is on the vacuolar side. Residues 576-596 (IAAGYFIVFYFAGTFLATLIS) traverse the membrane as a helical segment. Residues 597-710 (YLELFALPNK…WSASLPTWTW (114 aa)) are Cytoplasmic-facing. Residues 614–629 (SQYPSRLGSNRSSRIL) show a composition bias toward polar residues. The tract at residues 614–660 (SQYPSRLGSNRSSRILSPSADELPTGGDNNGEIYDGEEEPTESSSLL) is disordered. A helical membrane pass occupies residues 711–731 (VLQFLFVGPVVIMFIGQLGLF). Over 732 to 743 (LTSAMNQVGADG) the chain is Vacuolar. A helical membrane pass occupies residues 744 to 764 (VGLLVVYIAIAVFSVLLLIPL). Topologically, residues 765-777 (SPFIHRFTYHVPT) are cytoplasmic. Residues 778–798 (FLLLVFIATLIYNLAAFPFSA) form a helical membrane-spanning segment. Over 799–1012 (ENRLKIFFVQ…DGLVEVSRGF (214 aa)) the chain is Vacuolar. N-linked (GlcNAc...) asparagine glycosylation is found at asparagine 842 and asparagine 878.

It belongs to the peptidase M28 family. It depends on Zn(2+) as a cofactor.

Its subcellular location is the vacuole membrane. Functionally, may be involved in vacuolar sorting and osmoregulation. In Coccidioides posadasii (strain C735) (Valley fever fungus), this protein is Vacuolar membrane protease.